Consider the following 501-residue polypeptide: Isoflavone 3'-hydroxylase (501 aa).

The helical transmembrane segment at 7–24 (LLSLSFIITIKILLKITS) threads the bilayer. C439 is a binding site for heme.

Belongs to the cytochrome P450 family. Requires heme as cofactor. As to expression, expressed constitutively in leaves and stems, but not in roots.

It localises to the endoplasmic reticulum membrane. It catalyses the reaction formononetin + reduced [NADPH--hemoprotein reductase] + O2 = calycosin + oxidized [NADPH--hemoprotein reductase] + H2O + H(+). In terms of biological role, involved in the biosynthesis of the pterocarpin phytoalexins. Acts on isoflavones with a 4'-methoxy group on the B-ring, such as biochanin A, formononetin and 2'-hydroxyformononetin. Has a low activity with daidzein and pseudobaptigenin, and no activity with the 7-O-methylated isoflavonoids isoformononetin and prunetin. This chain is Isoflavone 3'-hydroxylase, found in Medicago truncatula (Barrel medic).